A 397-amino-acid chain; its full sequence is Efflux pump periplasmic linker BepD (397 aa).

The first 26 residues, 1–26, serve as a signal peptide directing secretion; that stretch reads MTLNRTIRCFAAGAAFIVFAAQPALA. A coiled-coil region spans residues 98-139; sequence APYQAELEKAQAQVAQAEAQYQQSIRDAERAEQLVQQKVQSA.

This sequence belongs to the membrane fusion protein (MFP) (TC 8.A.1) family. In terms of assembly, probably part of a tripartite efflux pump, which is composed of an outer membrane efflux protein, an inner membrane protein and a protein that expands the periplasmic space. Could form a tripartite pump with BepC and BepE.

The protein resides in the periplasm. Functionally, involved in resistance to several unrelated toxic compounds, such as dyes, detergents and antibiotics. In Brucella suis biovar 1 (strain 1330), this protein is Efflux pump periplasmic linker BepD (bepD).